Reading from the N-terminus, the 98-residue chain is Large ribosomal subunit protein uL23 (98 aa).

The protein belongs to the universal ribosomal protein uL23 family. Part of the 50S ribosomal subunit. Contacts protein L29, and trigger factor when it is bound to the ribosome.

One of the early assembly proteins it binds 23S rRNA. One of the proteins that surrounds the polypeptide exit tunnel on the outside of the ribosome. Forms the main docking site for trigger factor binding to the ribosome. The sequence is that of Large ribosomal subunit protein uL23 from Streptococcus sanguinis (strain SK36).